A 377-amino-acid polypeptide reads, in one-letter code: Short chain dehydrogenase gsfE (377 aa).

Positions 89, 121, 226, 266, and 268 each coordinate NADP(+). Catalysis depends on Tyr226, which acts as the Proton donor.

It belongs to the short-chain dehydrogenases/reductases (SDR) family. Highly divergent.

The catalysed reaction is dehydrogriseofulvin + NADPH + H(+) = griseofulvin + NADP(+). Its pathway is secondary metabolite biosynthesis; terpenoid biosynthesis. In terms of biological role, short chain dehydrogenase; part of the gene cluster that mediates the biosynthesis of griseofulvin, an important antifungal drug that has been in use for a long time for treating dermatophyte infections. The first step of the pathway is the formation of the heptaketide backbone by gsfA which is initiated by priming with acetyl-CoA, followed by sequential condensations of 6 malonyl-CoA units. The resulting benzophenone can undergo a spontaneous dehydration to form norlichexanthone. However, the true precursor for the griseofulvin biosynthesis is not norlichexanthone, but the heptaketide benzophenone that is O-methylated at 3-OH by gsfB to produce griseophenone D which is further methylated at 9-OH by gsfC to yield griseophenone C. Griseophenone C is then substrate of halogenase gsfI which is responsible for the regio-specific chlorination at the C13 position to form griseophenone B. The cytochrome P450 gsfF catalyzes the coupling of orcinol and phloroglucinol rings in griseophenone B to form desmethyl-dehydrogriseofulvin A which is further methylated at 5-OH by gsfD to yield dehydrogriseofulvin. Finally, gsfE performs stereospecific reduction of enone 18 of dehydrogriseofulvin to afford the final product griseofulvin. This Penicillium aethiopicum protein is Short chain dehydrogenase gsfE.